Consider the following 329-residue polypeptide: uncharacterized protein (329 aa).

The Nudix hydrolase domain occupies 27–185; sequence PRRASVAVII…IQIDSSRALK (159 aa). Transmembrane regions (helical) follow at residues 123–143, 227–247, and 303–323; these read VITS…VFIL, PFLR…LSPS, and LTLL…FLII.

The protein localises to the membrane. This is an uncharacterized protein from Schizosaccharomyces pombe (strain 972 / ATCC 24843) (Fission yeast).